The primary structure comprises 115 residues: Immunoglobulin kappa variable 5-48 (115 aa).

The N-terminal stretch at 1–20 (MVSTPQFLVFLLFWIPASRG) is a signal peptide. Positions 21–43 (DILLTQSPAILSVSPGERVSFSC) are framework-1. C43 and C108 are oxidised to a cystine. The segment at 44–54 (RASQSIGTSIH) is complementarity-determining-1. A framework-2 region spans residues 55–69 (WYQQRTNGSPRLLIK). The complementarity-determining-2 stretch occupies residues 70–76 (YASESIS). Positions 77 to 108 (GIPSRFSGSGSGTDFTLSINSVESEDIADYYC) are framework-3. A complementarity-determining-3 region spans residues 109 to 115 (QQSNSWP).

The chain is Immunoglobulin kappa variable 5-48 from Mus musculus (Mouse).